The sequence spans 327 residues: Delta(6)-protoilludene synthase HYPSUDRAFT_138665 (327 aa).

Residues Asp79, Asn215, Ser219, and Glu223 each contribute to the Mg(2+) site. Residues 79-83 carry the DDXXD motif motif; that stretch reads DEHTD. 2 residues coordinate (2E,6E)-farnesyl diphosphate: Arg304 and Tyr305.

Belongs to the terpene synthase family. Requires Mg(2+) as cofactor.

The catalysed reaction is (2E,6E)-farnesyl diphosphate = Delta(6)-protoilludene + diphosphate. In terms of biological role, terpene cyclase that catalyzes the cyclization of farnesyl diphosphate (FPP) to delta(6)-protoilludene. This Hypholoma sublateritium (strain FD-334 SS-4) protein is Delta(6)-protoilludene synthase HYPSUDRAFT_138665.